Reading from the N-terminus, the 156-residue chain is Small ribosomal subunit protein uS7 (156 aa).

This sequence belongs to the universal ribosomal protein uS7 family. Part of the 30S ribosomal subunit. Contacts proteins S9 and S11.

Functionally, one of the primary rRNA binding proteins, it binds directly to 16S rRNA where it nucleates assembly of the head domain of the 30S subunit. Is located at the subunit interface close to the decoding center, probably blocks exit of the E-site tRNA. In Dechloromonas aromatica (strain RCB), this protein is Small ribosomal subunit protein uS7.